Reading from the N-terminus, the 538-residue chain is Phosphoenolpyruvate carboxykinase (ATP) (538 aa).

R64 provides a ligand contact to substrate. Ca(2+) contacts are provided by N149 and F151. Substrate-binding residues include Y206 and K212. ATP is bound by residues K212, H231, and 247 to 255 (GLSGTGKTT). Residues K212 and H231 each contribute to the Mn(2+) site. Mn(2+) is bound at residue D268. ATP contacts are provided by residues E296, R332, 447 to 448 (RI), and T453. R332 lines the substrate pocket.

The protein belongs to the phosphoenolpyruvate carboxykinase (ATP) family. As to quaternary structure, monomer. Mn(2+) serves as cofactor.

It is found in the cytoplasm. It carries out the reaction oxaloacetate + ATP = phosphoenolpyruvate + ADP + CO2. Its pathway is carbohydrate biosynthesis; gluconeogenesis. Its activity is regulated as follows. Allosterically activated by calcium. Its function is as follows. Involved in the gluconeogenesis. Catalyzes the conversion of oxaloacetate (OAA) to phosphoenolpyruvate (PEP) through direct phosphoryl transfer between the nucleoside triphosphate and OAA. This chain is Phosphoenolpyruvate carboxykinase (ATP), found in Salmonella typhimurium (strain LT2 / SGSC1412 / ATCC 700720).